A 670-amino-acid polypeptide reads, in one-letter code: Sodium/potassium/calcium exchanger 2 (670 aa).

Over M1–R38 the chain is Cytoplasmic. Residues V39–F59 form a helical membrane-spanning segment. Over T60 to K133 the chain is Extracellular. Disordered regions lie at residues N67–R86 and L91–P122. The segment covering Q106–P122 has biased composition (basic and acidic residues). Residue N112 is glycosylated (N-linked (GlcNAc...) asparagine). The chain crosses the membrane as a helical span at residues G134–C154. At D155–T179 the chain is on the cytoplasmic side. Residues V175–F215 form an Alpha-1 repeat. A helical transmembrane segment spans residues F180–A200. At H201 to G205 the chain is on the extracellular side. The helical transmembrane segment at I206–L226 threads the bilayer. Residues F227 to S244 are Cytoplasmic-facing. Residues F245–W265 form a helical membrane-spanning segment. A topological domain (extracellular) is located at residue E266. A helical membrane pass occupies residues S267 to V287. The Cytoplasmic portion of the chain corresponds to E288 to K506. Residues A312–S335 form a disordered region. Phosphoserine occurs at positions 337 and 341. Disordered regions lie at residues K394–A414 and A450–S471. The chain crosses the membrane as a helical span at residues F507–V527. At W528–E542 the chain is on the extracellular side. A helical transmembrane segment spans residues I543 to I563. The stretch at A550–N581 is one Alpha-2 repeat. Residues V564–V578 are Cytoplasmic-facing. A helical membrane pass occupies residues G579–I599. At H600 to G611 the chain is on the extracellular side. Residues L612–L632 form a helical membrane-spanning segment. The Cytoplasmic portion of the chain corresponds to C633–K639. Residues I640 to E660 form a helical membrane-spanning segment. The Extracellular segment spans residues D661 to I670.

This sequence belongs to the Ca(2+):cation antiporter (CaCA) (TC 2.A.19) family. SLC24A subfamily. In terms of tissue distribution, expressed abundantly in all regions of the brain and weakly in the eye, large intestine and adrenal tissue.

It localises to the cell membrane. The enzyme catalyses Ca(2+)(out) + K(+)(out) + 4 Na(+)(in) = Ca(2+)(in) + K(+)(in) + 4 Na(+)(out). Functionally, calcium, potassium:sodium antiporter that transports 1 Ca(2+) and 1 K(+) in exchange for 4 Na(+). Required for learming and memory by regulating neuronal Ca(2+), which is essential for the development of synaptic plasticity. The chain is Sodium/potassium/calcium exchanger 2 (Slc24a2) from Rattus norvegicus (Rat).